The chain runs to 461 residues: Cysteine--tRNA ligase (461 aa).

A Zn(2+)-binding site is contributed by C28. Positions 30-40 (ITIYDLCHIGH) match the 'HIGH' region motif. Positions 209, 234, and 238 each coordinate Zn(2+). The 'KMSKS' region motif lies at 266–270 (KMSKS). An ATP-binding site is contributed by K269.

It belongs to the class-I aminoacyl-tRNA synthetase family. As to quaternary structure, monomer. Zn(2+) is required as a cofactor.

The protein resides in the cytoplasm. The enzyme catalyses tRNA(Cys) + L-cysteine + ATP = L-cysteinyl-tRNA(Cys) + AMP + diphosphate. This chain is Cysteine--tRNA ligase, found in Photorhabdus laumondii subsp. laumondii (strain DSM 15139 / CIP 105565 / TT01) (Photorhabdus luminescens subsp. laumondii).